The sequence spans 487 residues: F-box/LRR-repeat protein At1g48400 (487 aa).

One can recognise an F-box domain in the interval arginine 9–serine 57. 6 LRR repeats span residues serine 71–arginine 97, histidine 125–alanine 153, serine 174–aspartate 199, threonine 225–serine 251, threonine 327–serine 358, and asparagine 359–glycine 384.

This Arabidopsis thaliana (Mouse-ear cress) protein is F-box/LRR-repeat protein At1g48400.